Here is a 122-residue protein sequence, read N- to C-terminus: Protein FAM223B (122 aa).

It belongs to the FAM223 family.

This chain is Protein FAM223B (FAM223B), found in Homo sapiens (Human).